Here is a 331-residue protein sequence, read N- to C-terminus: Phenylalanine--tRNA ligase alpha subunit (331 aa).

A Mg(2+)-binding site is contributed by Glu252.

The protein belongs to the class-II aminoacyl-tRNA synthetase family. Phe-tRNA synthetase alpha subunit type 1 subfamily. In terms of assembly, tetramer of two alpha and two beta subunits. Mg(2+) is required as a cofactor.

It localises to the cytoplasm. The enzyme catalyses tRNA(Phe) + L-phenylalanine + ATP = L-phenylalanyl-tRNA(Phe) + AMP + diphosphate + H(+). This is Phenylalanine--tRNA ligase alpha subunit from Xanthomonas oryzae pv. oryzae (strain MAFF 311018).